The following is a 352-amino-acid chain: Putative hetero-Diels-Alderase (352 aa).

The N-terminal stretch at 1–20 (MRYHLSALVLVFTAFRETLT) is a signal peptide. N-linked (GlcNAc...) asparagine glycosylation is found at N26, N41, N47, N135, N211, and N310.

This sequence belongs to the eupF Diels-Alderase family.

Its pathway is secondary metabolite biosynthesis; terpenoid biosynthesis. Putative hetero-Diels-Alderase; part of the gene cluster that mediates the biosynthesis of eupenifeldin, a bistropolone meroterpenoid that acts as an antitumor agent. The first step of eupenifeldin biosynthesis is the biosynthesis of 3-methylorcinaldehyde performed by the non-reducing polyketide synthase eupA. Oxidative dearomatization of 3-methylorcinaldehyde likely catalyzed by the FAD-dependent monooxygenase eupB is followed by oxidative ring expansion by the 2-oxoglutarate-dependent dioxygenase eupC to provide the first tropolone metabolite, tropolone stipitaldehyde. In parallel, generation of sesquiterpene alpha-humulene from farnesylpyrophosphate (FPP) is catalyzed by the terpene cyclase eupE. The cytochrome P450 monooxygenase eupD then hydroxylates humulene to humulenol. The putative Diels-Alderase eupF probably catalyzes the formation of the tropolone-humulene skeleton by linking humulenol and the polyketide moiety. The short-chain dehydrogenase/reductase eupG and the flavin-dependent monooxygenase eupH are also essential for eupenifeldin biosynthesis and are likely the additional decorating enzymes of the tropolone-humulene skeleton to produce final eupenifeldin or derivatives. This is Putative hetero-Diels-Alderase from Phoma sp.